Here is a 224-residue protein sequence, read N- to C-terminus: Cytochrome c oxidase subunit 2 (224 aa).

Residues 1 to 26 (MSTWGQINLMDPASPIQMEMMLFHDH) are Mitochondrial intermembrane-facing. Residues 27–48 (AMAILIGIFTLVSLLGVKLCFN) form a helical membrane-spanning segment. At 49–62 (TLSTRTMHEAQLLE) the chain is on the mitochondrial matrix side. Residues 63 to 82 (TLWTILPAFLLVWLALPSLR) form a helical membrane-spanning segment. Topologically, residues 83–224 (LLYLLDEQGS…DVKDFIKMCN (142 aa)) are mitochondrial intermembrane. 6 residues coordinate Cu cation: histidine 161, cysteine 196, glutamate 198, cysteine 200, histidine 204, and methionine 207. Glutamate 198 lines the Mg(2+) pocket.

The protein belongs to the cytochrome c oxidase subunit 2 family. Component of the cytochrome c oxidase (complex IV, CIV), a multisubunit enzyme composed of a catalytic core of 3 subunits and several supernumerary subunits. The complex exists as a monomer or a dimer and forms supercomplexes (SCs) in the inner mitochondrial membrane with ubiquinol-cytochrome c oxidoreductase (cytochrome b-c1 complex, complex III, CIII). Requires Cu cation as cofactor.

The protein resides in the mitochondrion inner membrane. It catalyses the reaction 4 Fe(II)-[cytochrome c] + O2 + 8 H(+)(in) = 4 Fe(III)-[cytochrome c] + 2 H2O + 4 H(+)(out). Component of the cytochrome c oxidase, the last enzyme in the mitochondrial electron transport chain which drives oxidative phosphorylation. The respiratory chain contains 3 multisubunit complexes succinate dehydrogenase (complex II, CII), ubiquinol-cytochrome c oxidoreductase (cytochrome b-c1 complex, complex III, CIII) and cytochrome c oxidase (complex IV, CIV), that cooperate to transfer electrons derived from NADH and succinate to molecular oxygen, creating an electrochemical gradient over the inner membrane that drives transmembrane transport and the ATP synthase. Cytochrome c oxidase is the component of the respiratory chain that catalyzes the reduction of oxygen to water. Electrons originating from reduced cytochrome c in the intermembrane space (IMS) are transferred via the dinuclear copper A center (CU(A)) of subunit 2 and heme A of subunit 1 to the active site in subunit 1, a binuclear center (BNC) formed by heme A3 and copper B (CU(B)). The BNC reduces molecular oxygen to 2 water molecules using 4 electrons from cytochrome c in the IMS and 4 protons from the mitochondrial matrix. In Albinaria caerulea (Land snail), this protein is Cytochrome c oxidase subunit 2 (COII).